The chain runs to 473 residues: Photosystem II CP43 reaction center protein (473 aa).

A propeptide spanning residues Met1–Glu14 is cleaved from the precursor. Thr15 is modified (N-acetylthreonine). Thr15 bears the Phosphothreonine mark. Transmembrane regions (helical) follow at residues Leu69–Ala93, Leu134–Asn155, Lys178–Thr200, Lys255–Ser275, and Trp291–Ala312. Glu367 lines the [CaMn4O5] cluster pocket. Residues Arg447–Pro471 traverse the membrane as a helical segment.

The protein belongs to the PsbB/PsbC family. PsbC subfamily. PSII is composed of 1 copy each of membrane proteins PsbA, PsbB, PsbC, PsbD, PsbE, PsbF, PsbH, PsbI, PsbJ, PsbK, PsbL, PsbM, PsbT, PsbX, PsbY, PsbZ, Psb30/Ycf12, at least 3 peripheral proteins of the oxygen-evolving complex and a large number of cofactors. It forms dimeric complexes. Binds multiple chlorophylls and provides some of the ligands for the Ca-4Mn-5O cluster of the oxygen-evolving complex. It may also provide a ligand for a Cl- that is required for oxygen evolution. PSII binds additional chlorophylls, carotenoids and specific lipids. is required as a cofactor.

It is found in the plastid. It localises to the chloroplast thylakoid membrane. One of the components of the core complex of photosystem II (PSII). It binds chlorophyll and helps catalyze the primary light-induced photochemical processes of PSII. PSII is a light-driven water:plastoquinone oxidoreductase, using light energy to abstract electrons from H(2)O, generating O(2) and a proton gradient subsequently used for ATP formation. This is Photosystem II CP43 reaction center protein from Adiantum capillus-veneris (Maidenhair fern).